Consider the following 491-residue polypeptide: Aspartyl/glutamyl-tRNA(Asn/Gln) amidotransferase subunit B (491 aa).

It belongs to the GatB/GatE family. GatB subfamily. In terms of assembly, heterotrimer of A, B and C subunits.

It catalyses the reaction L-glutamyl-tRNA(Gln) + L-glutamine + ATP + H2O = L-glutaminyl-tRNA(Gln) + L-glutamate + ADP + phosphate + H(+). The catalysed reaction is L-aspartyl-tRNA(Asn) + L-glutamine + ATP + H2O = L-asparaginyl-tRNA(Asn) + L-glutamate + ADP + phosphate + 2 H(+). In terms of biological role, allows the formation of correctly charged Asn-tRNA(Asn) or Gln-tRNA(Gln) through the transamidation of misacylated Asp-tRNA(Asn) or Glu-tRNA(Gln) in organisms which lack either or both of asparaginyl-tRNA or glutaminyl-tRNA synthetases. The reaction takes place in the presence of glutamine and ATP through an activated phospho-Asp-tRNA(Asn) or phospho-Glu-tRNA(Gln). This is Aspartyl/glutamyl-tRNA(Asn/Gln) amidotransferase subunit B from Trichormus variabilis (strain ATCC 29413 / PCC 7937) (Anabaena variabilis).